The sequence spans 509 residues: Glycogen synthase (509 aa).

Residue lysine 47 coordinates ADP-alpha-D-glucose.

This sequence belongs to the glycosyltransferase 1 family. Bacterial/plant glycogen synthase subfamily.

It catalyses the reaction [(1-&gt;4)-alpha-D-glucosyl](n) + ADP-alpha-D-glucose = [(1-&gt;4)-alpha-D-glucosyl](n+1) + ADP + H(+). It functions in the pathway glycan biosynthesis; glycogen biosynthesis. Its function is as follows. Synthesizes alpha-1,4-glucan chains using ADP-glucose. This Xanthomonas oryzae pv. oryzae (strain MAFF 311018) protein is Glycogen synthase.